Consider the following 475-residue polypeptide: tRNA-2-methylthio-N(6)-dimethylallyladenosine synthase (475 aa).

Positions 2 to 119 (AKLHITTWGC…LPEMINKIRG (118 aa)) constitute an MTTase N-terminal domain. [4Fe-4S] cluster is bound by residues Cys11, Cys48, Cys82, Cys156, Cys160, and Cys163. The Radical SAM core domain occupies 142 to 374 (RAEGPTAFVS…QQRINHQAMQ (233 aa)). Residues 377-440 (RAMLGTEQRV…TNSLRGDVVR (64 aa)) form the TRAM domain.

This sequence belongs to the methylthiotransferase family. MiaB subfamily. Monomer. Requires [4Fe-4S] cluster as cofactor.

The protein resides in the cytoplasm. It carries out the reaction N(6)-dimethylallyladenosine(37) in tRNA + (sulfur carrier)-SH + AH2 + 2 S-adenosyl-L-methionine = 2-methylsulfanyl-N(6)-dimethylallyladenosine(37) in tRNA + (sulfur carrier)-H + 5'-deoxyadenosine + L-methionine + A + S-adenosyl-L-homocysteine + 2 H(+). In terms of biological role, catalyzes the methylthiolation of N6-(dimethylallyl)adenosine (i(6)A), leading to the formation of 2-methylthio-N6-(dimethylallyl)adenosine (ms(2)i(6)A) at position 37 in tRNAs that read codons beginning with uridine. This is tRNA-2-methylthio-N(6)-dimethylallyladenosine synthase from Actinobacillus pleuropneumoniae serotype 5b (strain L20).